Consider the following 510-residue polypeptide: Pectinesterase 2 (510 aa).

A signal peptide spans 1 to 19; the sequence is MALRILITVSLVLFSLSHT. Asn-110 and Asn-158 each carry an N-linked (GlcNAc...) asparagine glycan. The substrate site is built by Thr-275 and Gln-305. The active-site Proton donor is the Asp-328. Cys-342 and Cys-362 are oxidised to a cystine. Asp-349 serves as the catalytic Nucleophile. N-linked (GlcNAc...) asparagine glycosylation is found at Asn-371 and Asn-385. Substrate contacts are provided by Arg-416 and Trp-418.

It in the N-terminal section; belongs to the PMEI family. The protein in the C-terminal section; belongs to the pectinesterase family. In terms of tissue distribution, expressed at low levels in young leaves, young bark, young fruit, mature fruit vesicles, shoots and flower buds, young bark and juice vesicles. In both leaf and fruit abscission zones, and mature leaves, expression was initially undetectable but increased markedly following ethylene treatment.

The protein resides in the secreted. It localises to the cell wall. The enzyme catalyses [(1-&gt;4)-alpha-D-galacturonosyl methyl ester](n) + n H2O = [(1-&gt;4)-alpha-D-galacturonosyl](n) + n methanol + n H(+). It participates in glycan metabolism; pectin degradation; 2-dehydro-3-deoxy-D-gluconate from pectin: step 1/5. Functionally, acts in the modification of cell walls via demethylesterification of cell wall pectin. The polypeptide is Pectinesterase 2 (PECS-2.1) (Citrus sinensis (Sweet orange)).